Reading from the N-terminus, the 1133-residue chain is DNA repair protein rad8 (1133 aa).

Disordered stretches follow at residues 1-34 (MKRK…SKPN) and 392-413 (PEAR…EEDV). At Ser-18 the chain carries Phosphoserine. Residues 516–705 (PNSMPYHRGG…YSLIKFMRYE (190 aa)) form the Helicase ATP-binding domain. ATP is bound at residue 529–536 (DEMGLGKT). The DEGH box signature appears at 656–659 (DEGH). The RING-type zinc finger occupies 877–923 (CPICCNEPIQNPLLLNCKHACCGDCLSEHIQYQKRRNIIPPLCHTCR). One can recognise a Helicase C-terminal domain in the interval 971 to 1125 (QLRQLTHSSE…EGKQQVQSIE (155 aa)).

The protein belongs to the SNF2/RAD54 helicase family.

The protein resides in the cytoplasm. It localises to the nucleus. Probable helicase, member of the UBC2/RAD6 epistasis group. Functions with DNA repair protein rad18 in error-free postreplication DNA repair. Involved in the maintenance of wild-type rates of instability of simple repetitive sequences such as poly(GT) repeats. Plays a role in surviving topoisomerase-mediated DNA damage. The chain is DNA repair protein rad8 from Schizosaccharomyces pombe (strain 972 / ATCC 24843) (Fission yeast).